Here is a 316-residue protein sequence, read N- to C-terminus: Ribosomal RNA small subunit methyltransferase H (316 aa).

Residues 35–37 (AGH), D55, F84, D105, and Q112 each bind S-adenosyl-L-methionine.

Belongs to the methyltransferase superfamily. RsmH family.

The protein resides in the cytoplasm. The catalysed reaction is cytidine(1402) in 16S rRNA + S-adenosyl-L-methionine = N(4)-methylcytidine(1402) in 16S rRNA + S-adenosyl-L-homocysteine + H(+). In terms of biological role, specifically methylates the N4 position of cytidine in position 1402 (C1402) of 16S rRNA. This Streptococcus gordonii (strain Challis / ATCC 35105 / BCRC 15272 / CH1 / DL1 / V288) protein is Ribosomal RNA small subunit methyltransferase H.